The following is a 67-amino-acid chain: Protein AaeX (67 aa).

The next 2 helical transmembrane spans lie at 3-23 (LLPV…ELLI) and 39-59 (GIYE…CCLF).

The protein belongs to the AaeX family.

The protein localises to the cell membrane. The polypeptide is Protein AaeX (Yersinia pseudotuberculosis serotype O:1b (strain IP 31758)).